The primary structure comprises 196 residues: DnaA initiator-associating protein DiaA (196 aa).

The 163-residue stretch at leucine 34–aspartate 196 folds into the SIS domain.

This sequence belongs to the SIS family. DiaA subfamily. In terms of assembly, homotetramer; dimer of dimers.

In terms of biological role, required for the timely initiation of chromosomal replication via direct interactions with the DnaA initiator protein. In Enterobacter sp. (strain 638), this protein is DnaA initiator-associating protein DiaA.